Here is a 411-residue protein sequence, read N- to C-terminus: Ubiquitin-binding protein CUE5 (411 aa).

A compositionally biased stretch (basic and acidic residues) spans 1 to 12 (MEEKEGIKDSSL). Disordered regions lie at residues 1-102 (MEEK…NPIL) and 142-411 (ESGK…DDEM). Lys-15 participates in a covalent cross-link: Glycyl lysine isopeptide (Lys-Gly) (interchain with G-Cter in ubiquitin). A phosphoserine mark is found at Ser-21 and Ser-36. A compositionally biased stretch (basic and acidic residues) spans 25–58 (DISKTTDVDLNSDGKKDNDTSAKDGTPKVEEKVN). Lys-59 participates in a covalent cross-link: Glycyl lysine isopeptide (Lys-Gly) (interchain with G-Cter in ubiquitin). Position 70 is a phosphothreonine (Thr-70). Residue Lys-76 forms a Glycyl lysine isopeptide (Lys-Gly) (interchain with G-Cter in ubiquitin) linkage. Residue Ser-91 is modified to Phosphoserine. The CUE domain occupies 97–140 (KENPILQELKDAFPNLEEKYIKAVIIASQGVLSPAFNALLFLSD). Lys-156 participates in a covalent cross-link: Glycyl lysine isopeptide (Lys-Gly) (interchain with G-Cter in ubiquitin). Thr-167 is subject to Phosphothreonine. Basic and acidic residues predominate over residues 209–219 (NPNEREQHHED). Phosphoserine is present on Ser-220. A compositionally biased stretch (basic and acidic residues) spans 230-242 (VEKDLPELTDRAG). A compositionally biased stretch (polar residues) spans 245–256 (LQDTANKVSNWI). A phosphoserine mark is found at Ser-309 and Ser-318. Thr-346 carries the phosphothreonine modification. Ser-348 carries the post-translational modification Phosphoserine. Thr-352 is modified (phosphothreonine). Lys-354 participates in a covalent cross-link: Glycyl lysine isopeptide (Lys-Gly) (interchain with G-Cter in ubiquitin). Thr-364 and Thr-367 each carry phosphothreonine. Positions 373-376 (WQPL) match the AIM motif. Lys-396 participates in a covalent cross-link: Glycyl lysine isopeptide (Lys-Gly) (interchain with G-Cter in ubiquitin). A compositionally biased stretch (acidic residues) spans 399–411 (DEDEFLINSDDEM). At Ser-407 the chain carries Phosphoserine.

As to quaternary structure, interacts with ATG8 (via AIM motif), CLB2, and ubiquitin (via CUE domain).

It localises to the cytoplasm. In terms of biological role, connects the ubiquitin pathway to autophagy by functioning as a ubiquitin-ATG8 adapter and thus mediating autophagic clearance of ubiquitin conjugates under starvation conditions. The CUE5-dependent selective autophagy pathway plays an important role in clearance of cytotoxic protein aggregates. Not required for cytoplasmic to vacuole pathway (cvt), mitophagy, pexophagy, or ribophagy. The polypeptide is Ubiquitin-binding protein CUE5 (Saccharomyces cerevisiae (strain ATCC 204508 / S288c) (Baker's yeast)).